We begin with the raw amino-acid sequence, 337 residues long: Metacaspase III c (337 aa).

2 consecutive propeptides follow at residues 1–6 (MGFLRR) and 116–125 (VPPAATGTRR). Cys-202 bears the Cysteine sulfenic acid (-SOH) mark. Cysteines 202 and 259 form a disulfide. Residue His-207 is part of the active site. Residues Asp-224, Asp-240, and Asp-241 each coordinate Ca(2+). Cys-264 is a catalytic residue. Asp-271 provides a ligand contact to Ca(2+). Residues 290-337 (NFDFKKLLGKFGIDDFDKFGGEALGKINGDALGKVGKDALGKLNKFFG) constitute a propeptide that is removed on maturation.

The protein belongs to the peptidase C14B family. Post-translationally, auto-proteolytic cleavage into a large and a small subunit which probably remain associated by non-covalent bonds. In terms of processing, following oxidative stress, the oxidation of Cys-202 leads to the formation of a disulfide bond between Cys-202 and Cys-259 which enhances catalytic activity.

Its activity is regulated as follows. Activated by Ca(2+). Cysteine protease that cleaves specifically after arginine residues. This Phaeodactylum tricornutum (strain CCAP 1055/1) protein is Metacaspase III c.